A 124-amino-acid chain; its full sequence is Small ribosomal subunit protein uS12 (124 aa).

A 3-methylthioaspartic acid modification is found at D89. The tract at residues 103 to 124 is disordered; that stretch reads DTAGVKDRRQGRSKYGAKRPKD. A compositionally biased stretch (basic residues) spans 113-124; it reads GRSKYGAKRPKD.

Belongs to the universal ribosomal protein uS12 family. As to quaternary structure, part of the 30S ribosomal subunit. Contacts proteins S8 and S17. May interact with IF1 in the 30S initiation complex.

In terms of biological role, with S4 and S5 plays an important role in translational accuracy. Functionally, interacts with and stabilizes bases of the 16S rRNA that are involved in tRNA selection in the A site and with the mRNA backbone. Located at the interface of the 30S and 50S subunits, it traverses the body of the 30S subunit contacting proteins on the other side and probably holding the rRNA structure together. The combined cluster of proteins S8, S12 and S17 appears to hold together the shoulder and platform of the 30S subunit. The chain is Small ribosomal subunit protein uS12 from Acaryochloris marina (strain MBIC 11017).